Here is a 341-residue protein sequence, read N- to C-terminus: Elongation factor Ts, mitochondrial 2 (341 aa).

A mitochondrion-targeting transit peptide spans Met-1–Tyr-17.

The protein belongs to the EF-Ts family.

The protein resides in the mitochondrion. Its function is as follows. Associates with the EF-Tu.GDP complex and induces the exchange of GDP to GTP. It remains bound to the aminoacyl-tRNA.EF-Tu.GTP complex up to the GTP hydrolysis stage on the ribosome. The protein is Elongation factor Ts, mitochondrial 2 of Postia placenta (strain ATCC 44394 / Madison 698-R) (Brown rot fungus).